The sequence spans 171 residues: Large ribosomal subunit protein uL10 (171 aa).

The protein belongs to the universal ribosomal protein uL10 family. As to quaternary structure, part of the ribosomal stalk of the 50S ribosomal subunit. The N-terminus interacts with L11 and the large rRNA to form the base of the stalk. The C-terminus forms an elongated spine to which L12 dimers bind in a sequential fashion forming a multimeric L10(L12)X complex.

Its function is as follows. Forms part of the ribosomal stalk, playing a central role in the interaction of the ribosome with GTP-bound translation factors. In Maricaulis maris (strain MCS10) (Caulobacter maris), this protein is Large ribosomal subunit protein uL10.